Consider the following 169-residue polypeptide: PTS system glucose-specific EIIA component (169 aa).

Residues 39–143 form the PTS EIIA type-1 domain; the sequence is DVVFAEKIVG…STLTPVVISN (105 aa). Zn(2+) contacts are provided by histidine 76 and histidine 91. The active-site Tele-phosphohistidine intermediate; for EIIA activity is histidine 91. At histidine 91 the chain carries Phosphohistidine; by HPr.

As to quaternary structure, heterodimer with glycerol kinase (glpk). Requires Zn(2+) as cofactor.

It localises to the cytoplasm. Functionally, the phosphoenolpyruvate-dependent sugar phosphotransferase system (sugar PTS), a major carbohydrate active transport system, catalyzes the phosphorylation of incoming sugar substrates concomitantly with their translocation across the cell membrane. The enzyme II complex composed of PtsG and Crr is involved in glucose transport. The chain is PTS system glucose-specific EIIA component (crr) from Escherichia coli O6:H1 (strain CFT073 / ATCC 700928 / UPEC).